The following is a 398-amino-acid chain: Sphingosine 1-phosphate receptor 5 (398 aa).

Residues 1-40 (MEPGLLRPAPVSEVIVLHYNYTGKLRGARYQPGAGLRADA) lie on the Extracellular side of the membrane. N20 is a glycosylation site (N-linked (GlcNAc...) asparagine). The helical transmembrane segment at 41–61 (VVCLAVCALIVLENLAVLVVL) threads the bilayer. Over 62 to 70 (GRHPRFHAP) the chain is Cytoplasmic. Residues 71 to 91 (MFLLLGSLTLSDLLAGAAYAA) traverse the membrane as a helical segment. Residues 92–111 (NILLSGPLTLRLSPALWFAR) lie on the Extracellular side of the membrane. A helical transmembrane segment spans residues 112–132 (EGGVFVALAASVLSLLAIALE). The Cytoplasmic segment spans residues 133–151 (RLLTMERRGPAPAARRGRT). Residues 152–172 (LALAAGAWGVSLLLGLLPALG) traverse the membrane as a helical segment. At 173–191 (WNCLGRLEACSTVLPLYAK) the chain is on the extracellular side. Residues 192–212 (AYVLFCVLAFVGILAAICGLY) traverse the membrane as a helical segment. The Cytoplasmic segment spans residues 213–252 (ARIYCQVRAKAQRLRARPGAGEGTSARARGTPRSLALLRT). The chain crosses the membrane as a helical span at residues 253–273 (LSVVLVAFVACWGPLFLLLLL). Residues 274–287 (DVACPARACPVLLQ) are Extracellular-facing. Residues 288-308 (ADPFLGLAMANSLLNPIIYTF) traverse the membrane as a helical segment. Topologically, residues 309–398 (TNRDLRHALL…QTLVPPPAAD (90 aa)) are cytoplasmic. C323 is lipidated: S-palmitoyl cysteine. The disordered stretch occupies residues 332–398 (SGTSRSPGST…QTLVPPPAAD (67 aa)). Residues 334-343 (TSRSPGSTLG) are compositionally biased toward low complexity. A Phosphoserine modification is found at S337. A compositionally biased stretch (basic and acidic residues) spans 359–373 (SSSRSERSSPQRDGL). A Phosphoserine modification is found at S381.

The protein belongs to the G-protein coupled receptor 1 family.

It localises to the cell membrane. Its function is as follows. Receptor for the lysosphingolipid sphingosine 1-phosphate (S1P). S1P is a bioactive lysophospholipid that elicits diverse physiological effect on most types of cells and tissues. Is coupled to both the G(i/O)alpha and G(12) subclass of heteromeric G-proteins. The protein is Sphingosine 1-phosphate receptor 5 (S1PR5) of Sus scrofa (Pig).